The chain runs to 828 residues: Periplasmic nitrate reductase (828 aa).

Positions 1-31 (MKLSRRSFMKANAVAAAAAAAGLSVPGVARA) form a signal peptide, tat-type signal. Residues 39 to 95 (IKWDKAPCRFCGTGCGVLVGTQQGRVVACQGDPDAPVNRGLNCIKGYFLPKIMYGKD) form the 4Fe-4S Mo/W bis-MGD-type domain. [4Fe-4S] cluster is bound by residues Cys-46, Cys-49, Cys-53, and Cys-81. Mo-bis(molybdopterin guanine dinucleotide)-binding positions include Lys-83, Gln-150, Asn-175, Cys-179, 212–219 (WGANMAEM), 243–247 (STYQH), 262–264 (QSD), Met-372, Gln-376, Asn-482, 508–509 (SD), Lys-531, Asp-558, and 718–727 (TGRVLEHWHT). Phe-794 serves as a coordination point for substrate. Mo-bis(molybdopterin guanine dinucleotide) contacts are provided by Asn-802 and Lys-819.

It belongs to the prokaryotic molybdopterin-containing oxidoreductase family. NasA/NapA/NarB subfamily. As to quaternary structure, component of the periplasmic nitrate reductase NapAB complex composed of NapA and NapB. [4Fe-4S] cluster is required as a cofactor. The cofactor is Mo-bis(molybdopterin guanine dinucleotide). Post-translationally, predicted to be exported by the Tat system. The position of the signal peptide cleavage has not been experimentally proven.

The protein resides in the periplasm. The catalysed reaction is 2 Fe(II)-[cytochrome] + nitrate + 2 H(+) = 2 Fe(III)-[cytochrome] + nitrite + H2O. Catalytic subunit of the periplasmic nitrate reductase complex NapAB. Receives electrons from NapB and catalyzes the reduction of nitrate to nitrite. The polypeptide is Periplasmic nitrate reductase (Shigella flexneri serotype 5b (strain 8401)).